Reading from the N-terminus, the 248-residue chain is NADP-dependent 3-hydroxy acid dehydrogenase YdfG (248 aa).

NADP(+) contacts are provided by residues 7-12 (GATAGF), 32-33 (RR), 54-55 (DV), and asparagine 81. Residue serine 134 participates in substrate binding. NADP(+) contacts are provided by residues tyrosine 147, lysine 151, and 177-185 (PGLVGGTEF). Tyrosine 147 (proton acceptor) is an active-site residue.

The protein belongs to the short-chain dehydrogenases/reductases (SDR) family. In terms of assembly, homotetramer.

It carries out the reaction 3-hydroxypropanoate + NADP(+) = 3-oxopropanoate + NADPH + H(+). It catalyses the reaction L-allo-threonine + NADP(+) = aminoacetone + CO2 + NADPH. NADP-dependent dehydrogenase with broad substrate specificity acting on 3-hydroxy acids. Catalyzes the NADP-dependent oxidation of L-allo-threonine to L-2-amino-3-keto-butyrate, which is spontaneously decarboxylated into aminoacetone. Also acts on D-threonine, L-serine, D-serine, D-3-hydroxyisobutyrate, L-3-hydroxyisobutyrate, D-glycerate and L-glycerate. Able to catalyze the reduction of the malonic semialdehyde to 3-hydroxypropionic acid. YdfG is apparently supplementing RutE, the presumed malonic semialdehyde reductase involved in pyrimidine degradation since both are able to detoxify malonic semialdehyde. The protein is NADP-dependent 3-hydroxy acid dehydrogenase YdfG of Shigella flexneri.